Here is a 332-residue protein sequence, read N- to C-terminus: Tryptophan--tRNA ligase (332 aa).

ATP contacts are provided by residues 13–15 and 21–22; these read KPS and GN. Residues 14-22 carry the 'HIGH' region motif; sequence PSGDLTLGN. Aspartate 137 provides a ligand contact to L-tryptophan. ATP-binding positions include 149 to 151, isoleucine 188, and 197 to 201; these read GKD and KMSKS. Positions 197-201 match the 'KMSKS' region motif; the sequence is KMSKS.

It belongs to the class-I aminoacyl-tRNA synthetase family. In terms of assembly, homodimer.

The protein localises to the cytoplasm. The catalysed reaction is tRNA(Trp) + L-tryptophan + ATP = L-tryptophyl-tRNA(Trp) + AMP + diphosphate + H(+). In terms of biological role, catalyzes the attachment of tryptophan to tRNA(Trp). This is Tryptophan--tRNA ligase from Clostridium perfringens (strain 13 / Type A).